A 439-amino-acid polypeptide reads, in one-letter code: Damage-control phosphatase ARMT1 (439 aa).

At alanine 2 the chain carries N-acetylalanine. Phosphoserine is present on serine 4. At lysine 40 the chain carries N6-acetyllysine. 2 residues coordinate Mn(2+): aspartate 251 and asparagine 252. 251–252 is a binding site for substrate; it reads DN. S-adenosyl-L-methionine-binding residues include glutamate 256 and aspartate 289. Position 289 (aspartate 289) interacts with Mn(2+). Substrate-binding positions include 365–369 and lysine 402; that span reads DLNYR. A Subfamily III RTxK motif motif is present at residues 399–402; sequence RTLK.

It belongs to the damage-control phosphatase family. Sugar phosphate phosphatase III subfamily. The cofactor is Mn(2+). It depends on Ni(2+) as a cofactor. In terms of processing, automethylated.

The catalysed reaction is beta-D-fructose 1-phosphate + H2O = D-fructose + phosphate. It catalyses the reaction beta-D-fructose 6-phosphate = dihydroxyacetone + D-glyceraldehyde 3-phosphate. It carries out the reaction L-glutamyl-[protein] + S-adenosyl-L-methionine = [protein]-L-glutamate 5-O-methyl ester + S-adenosyl-L-homocysteine. Metal-dependent phosphatase that shows phosphatase activity against several substrates, including fructose-1-phosphate and fructose-6-phosphate. Its preference for fructose-1-phosphate, a strong glycating agent that causes DNA damage rather than a canonical yeast metabolite, suggests a damage-control function in hexose phosphate metabolism. Has also been shown to have O-methyltransferase activity that methylates glutamate residues of target proteins to form gamma-glutamyl methyl ester residues. Possibly methylates PCNA, suggesting it is involved in the DNA damage response. The protein is Damage-control phosphatase ARMT1 of Rattus norvegicus (Rat).